A 378-amino-acid polypeptide reads, in one-letter code: Erythronate-4-phosphate dehydrogenase (378 aa).

Substrate contacts are provided by S45 and T66. Positions 146 and 175 each coordinate NAD(+). R208 is an active-site residue. D232 contacts NAD(+). E237 is a catalytic residue. The Proton donor role is filled by H254. Residue G257 participates in NAD(+) binding. Y258 contacts substrate.

The protein belongs to the D-isomer specific 2-hydroxyacid dehydrogenase family. PdxB subfamily. In terms of assembly, homodimer.

The protein localises to the cytoplasm. It catalyses the reaction 4-phospho-D-erythronate + NAD(+) = (R)-3-hydroxy-2-oxo-4-phosphooxybutanoate + NADH + H(+). Its pathway is cofactor biosynthesis; pyridoxine 5'-phosphate biosynthesis; pyridoxine 5'-phosphate from D-erythrose 4-phosphate: step 2/5. Its function is as follows. Catalyzes the oxidation of erythronate-4-phosphate to 3-hydroxy-2-oxo-4-phosphonooxybutanoate. The chain is Erythronate-4-phosphate dehydrogenase from Shigella flexneri serotype 5b (strain 8401).